The primary structure comprises 90 residues: Major mite allergen Der p 23 (90 aa).

The first 21 residues, M1–A21, serve as a signal peptide directing secretion. Residues A22–D42 form a disordered region. A compositionally biased stretch (low complexity) spans T30 to E39. Positions K44–T90 constitute a Chitin-binding type-2 domain. Intrachain disulfides connect C47-C66 and C76-C89. The interval G52–T90 is important for IgE-binding.

Monomer. Expressed in epithelial cells of the midgut.

The protein resides in the secreted. It is found in the endoplasmic reticulum. The protein localises to the cytoplasmic vesicle. Functionally, does not bind chitin in vitro. This Dermatophagoides pteronyssinus (European house dust mite) protein is Major mite allergen Der p 23.